Consider the following 354-residue polypeptide: UDP-3-O-acylglucosamine N-acyltransferase (354 aa).

The Proton acceptor role is filled by H245.

The protein belongs to the transferase hexapeptide repeat family. LpxD subfamily. Homotrimer.

It carries out the reaction a UDP-3-O-[(3R)-3-hydroxyacyl]-alpha-D-glucosamine + a (3R)-hydroxyacyl-[ACP] = a UDP-2-N,3-O-bis[(3R)-3-hydroxyacyl]-alpha-D-glucosamine + holo-[ACP] + H(+). It functions in the pathway bacterial outer membrane biogenesis; LPS lipid A biosynthesis. Its function is as follows. Catalyzes the N-acylation of UDP-3-O-acylglucosamine using 3-hydroxyacyl-ACP as the acyl donor. Is involved in the biosynthesis of lipid A, a phosphorylated glycolipid that anchors the lipopolysaccharide to the outer membrane of the cell. The polypeptide is UDP-3-O-acylglucosamine N-acyltransferase (Anaeromyxobacter dehalogenans (strain 2CP-1 / ATCC BAA-258)).